Consider the following 712-residue polypeptide: T-box transcription factor TBX2 (712 aa).

The T-box DNA-binding region spans 109–287 (LEAKELWDQF…NNPFAKGFRD (179 aa)). Residues 313 to 450 (PERDGAESDA…EGKEQGLAPL (138 aa)) form a disordered region. Over residues 326–336 (DPPPAREPPTS) the composition is skewed to pro residues. Residues Ser336, Ser342, and Ser360 each carry the phosphoserine modification. Basic and acidic residues-rich tracts occupy residues 363–372 (EPERLSEERA), 391–409 (TEPE…KEPA), and 421–444 (SLEK…EGKE). The repression domain 1 (RD1) stretch occupies residues 518 to 601 (GGNGGGGGPG…ATSAAAAAAA (84 aa)). A phosphoserine mark is found at Ser622, Ser653, Ser657, and Ser676. The segment at 637–687 (LTTGLASEGSKAAGGNSREPSPLPELALRKVGAPSRGALSPSGSAKEAANE) is disordered.

As to quaternary structure, binds DNA as a monomer. Interacts with PML (isoform PML-2, isoform PML-3 and isoform PML-4). In terms of tissue distribution, expressed primarily in adult in kidney, lung, and placenta. Weak expression in heart and ovary.

Its subcellular location is the nucleus. Transcription factor which acts as a transcriptional repressor. May also function as a transcriptional activator. Binds to the palindromic T site 5'-TTCACACCTAGGTGTGAA-3' DNA sequence, or a half-site, which are present in the regulatory region of several genes. Required for cardiac atrioventricular canal formation. May cooperate with NKX2.5 to negatively modulate expression of NPPA/ANF in the atrioventricular canal. May play a role as a positive regulator of TGFB2 expression, perhaps acting in concert with GATA4 in the developing outflow tract myocardium. Plays a role in limb pattern formation. Acts as a transcriptional repressor of ADAM10 gene expression, perhaps in concert with histone deacetylase HDAC1 as cofactor. Involved in branching morphogenesis in both developing lungs and adult mammary glands, via negative modulation of target genes; acting redundantly with TBX3. Required, together with TBX3, to maintain cell proliferation in the embryonic lung mesenchyme; perhaps acting downstream of SHH, BMP and TGFbeta signaling. Involved in modulating early inner ear development, acting independently of, and also redundantly with TBX3, in different subregions of the developing ear. Acts as a negative regulator of PML function in cellular senescence. Acts as a negative regulator of expression of CDKN1A/p21, IL33 and CCN4; repression of CDKN1A is enhanced in response to UV-induced stress, perhaps as a result of phosphorylation by p38 MAPK. Negatively modulates expression of CDKN2A/p14ARF and CDH1/E-cadherin. Plays a role in induction of the epithelial-mesenchymal transition (EMT). Plays a role in melanocyte proliferation, perhaps via regulation of cyclin CCND1. Involved in melanogenesis, acting via negative modulation of expression of DHICA oxidase/TYRP1 and P protein/OCA2. Involved in regulating retinal pigment epithelium (RPE) cell proliferation, perhaps via negatively modulating transcription of the transcription factor CEBPD. This is T-box transcription factor TBX2 (TBX2) from Homo sapiens (Human).